Consider the following 191-residue polypeptide: MNDYTKYTIGVLSLQGAVSEHIAQIETLGAKAIAVKSLSELQQVDALVLPGGESTAMRRLMHSSGLFQALKSFDKPILGTCAGLILLANKLEGGEPPHLAKMNIQVQRNAFGRQVDSFQTDLMIKGFADPFPAVFIRAPYISRIGSEVEVLAEWQGNVVFAKQGNLLACAFHPELTSDTRVVELFLQQLKE.

Residue 52–54 (GES) participates in L-glutamine binding. Cys81 acts as the Nucleophile in catalysis. L-glutamine is bound by residues Arg108 and 136–137 (IR). Residues His172 and Glu174 each act as charge relay system in the active site.

This sequence belongs to the glutaminase PdxT/SNO family. In terms of assembly, in the presence of PdxS, forms a dodecamer of heterodimers. Only shows activity in the heterodimer.

It catalyses the reaction aldehydo-D-ribose 5-phosphate + D-glyceraldehyde 3-phosphate + L-glutamine = pyridoxal 5'-phosphate + L-glutamate + phosphate + 3 H2O + H(+). It carries out the reaction L-glutamine + H2O = L-glutamate + NH4(+). Its pathway is cofactor biosynthesis; pyridoxal 5'-phosphate biosynthesis. Its function is as follows. Catalyzes the hydrolysis of glutamine to glutamate and ammonia as part of the biosynthesis of pyridoxal 5'-phosphate. The resulting ammonia molecule is channeled to the active site of PdxS. The sequence is that of Pyridoxal 5'-phosphate synthase subunit PdxT from Actinobacillus pleuropneumoniae serotype 7 (strain AP76).